The chain runs to 134 residues: Phosphoribosyl-ATP pyrophosphatase (134 aa).

It belongs to the PRA-PH family.

The protein resides in the cytoplasm. The catalysed reaction is 1-(5-phospho-beta-D-ribosyl)-ATP + H2O = 1-(5-phospho-beta-D-ribosyl)-5'-AMP + diphosphate + H(+). It functions in the pathway amino-acid biosynthesis; L-histidine biosynthesis; L-histidine from 5-phospho-alpha-D-ribose 1-diphosphate: step 2/9. The sequence is that of Phosphoribosyl-ATP pyrophosphatase from Verminephrobacter eiseniae (strain EF01-2).